Consider the following 231-residue polypeptide: Ion-translocating oxidoreductase complex subunit E (231 aa).

Helical transmembrane passes span 18-38 (ALVQLLGLCPLLAVTSTATNA), 39-59 (LGLGLATTLVLTLTNLTISTL), 63-83 (TPAEIRIPIYVMIIASVVSAV), 86-106 (LINAYAFGLYQSLGIFIPLIV), 125-145 (ALSALDGFSIGMGATCAMFVL), and 182-202 (PFLLAMLPPGAFIGLGLMLAG).

This sequence belongs to the NqrDE/RnfAE family. The complex is composed of six subunits: RsxA, RsxB, RsxC, RsxD, RsxE and RsxG.

The protein resides in the cell inner membrane. Functionally, part of a membrane-bound complex that couples electron transfer with translocation of ions across the membrane. Required to maintain the reduced state of SoxR. This chain is Ion-translocating oxidoreductase complex subunit E, found in Escherichia coli O1:K1 / APEC.